Consider the following 321-residue polypeptide: Epoxyqueuosine reductase (321 aa).

The Proton donor role is filled by Asp137. One can recognise a 4Fe-4S ferredoxin-type domain in the interval 179–211 (EPLNADPPARSLCGRCSACIDACPTHAIREPFV). Cys191, Cys194, Cys197, Cys201, Cys217, Cys245, Cys248, and Cys252 together coordinate [4Fe-4S] cluster.

This sequence belongs to the QueG family. As to quaternary structure, monomer. It depends on cob(II)alamin as a cofactor. [4Fe-4S] cluster is required as a cofactor.

It localises to the cytoplasm. The enzyme catalyses epoxyqueuosine(34) in tRNA + AH2 = queuosine(34) in tRNA + A + H2O. It functions in the pathway tRNA modification; tRNA-queuosine biosynthesis. Functionally, catalyzes the conversion of epoxyqueuosine (oQ) to queuosine (Q), which is a hypermodified base found in the wobble positions of tRNA(Asp), tRNA(Asn), tRNA(His) and tRNA(Tyr). This Synechococcus sp. (strain CC9605) protein is Epoxyqueuosine reductase.